Here is a 542-residue protein sequence, read N- to C-terminus: Chaperonin GroEL (542 aa).

Residues 29–32 (TLGP), 86–90 (DGTTT), G413, 476–478 (NAA), and D492 each bind ATP.

It belongs to the chaperonin (HSP60) family. As to quaternary structure, forms a cylinder of 14 subunits composed of two heptameric rings stacked back-to-back. Interacts with the co-chaperonin GroES.

The protein resides in the cytoplasm. It carries out the reaction ATP + H2O + a folded polypeptide = ADP + phosphate + an unfolded polypeptide.. Together with its co-chaperonin GroES, plays an essential role in assisting protein folding. The GroEL-GroES system forms a nano-cage that allows encapsulation of the non-native substrate proteins and provides a physical environment optimized to promote and accelerate protein folding. This Bacillus cytotoxicus (strain DSM 22905 / CIP 110041 / 391-98 / NVH 391-98) protein is Chaperonin GroEL.